The primary structure comprises 394 residues: Envelope glycoprotein D (394 aa).

The signal sequence occupies residues 1–25 (MGGAAARLGAVILFVVIVGLHGVRG). The interaction with TNFRSF14 stretch occupies residues 26 to 57 (KYALADASLKMADPNRFRGKDLPVLDQLTDPP). Topologically, residues 26–340 (KYALADASLK…YHPPATPNNM (315 aa)) are virion surface. A Zn(2+)-binding site is contributed by H64. Intrachain disulfides connect C91-C214, C131-C227, and C143-C152. N-linked (GlcNAc...) asparagine; by host glycosylation is found at N119 and N146. Position 240 (D240) interacts with Zn(2+). The profusion stretch occupies residues 261–305 (LKIAGWHGPKAPYTSTLLPPELSETPNATQPELAPEDPEDSALLE). The interval 275 to 301 (STLLPPELSETPNATQPELAPEDPEDS) is disordered. N287 is a glycosylation site (N-linked (GlcNAc...) asparagine; by host). The helical transmembrane segment at 341–361 (GLIAGAVGGSLLAALVICGIV) threads the bilayer. Topologically, residues 362–394 (YWMHRRTRKAPKRIRLPHIREDDQPSSHQPLFY) are intravirion.

This sequence belongs to the herpesviridae glycoprotein D family. In terms of assembly, homodimer. Interacts with host receptor TNFRSF14. Interacts with host receptor NECTIN1. Mutant Rid1 interacts with host receptor NECTIN2. Interacts (via profusion domain) with gB; this interaction occurs in the absence of gH/gL. Interacts (via profusion domain) with gH/gL heterodimer; this interaction occurs in the absence of gB. Associates with the gB-gH/gL-gD complex. Interacts (via C-terminus) with UL11 tegument protein. Interacts (via C-terminus) with VP22 tegument protein; this interaction might be very weak. Interacts with host RSAD2.

The protein localises to the virion membrane. Its subcellular location is the host Golgi apparatus. In terms of biological role, envelope glycoprotein that binds to the host cell entry receptors NECTIN1, TNFRSF14/HVEM and 3-O-sulfated heparan sulfate, promoting the virus entry into host cells. May trigger fusion with host membrane, by recruiting the fusion machinery composed of gB and gH/gL. The sequence is that of Envelope glycoprotein D (gD) from Human herpesvirus 1 (strain KOS) (HHV-1).